We begin with the raw amino-acid sequence, 162 residues long: Phosphopantetheine adenylyltransferase (162 aa).

Ser-11 is a binding site for substrate. ATP-binding positions include 11-12 and His-19; that span reads SF. Residues Lys-43, Val-76, and Arg-90 each contribute to the substrate site. Residues 91–93, Glu-101, and 126–132 contribute to the ATP site; these read GLR and HLYISSS.

The protein belongs to the bacterial CoaD family. As to quaternary structure, homohexamer. The cofactor is Mg(2+).

Its subcellular location is the cytoplasm. It carries out the reaction (R)-4'-phosphopantetheine + ATP + H(+) = 3'-dephospho-CoA + diphosphate. It functions in the pathway cofactor biosynthesis; coenzyme A biosynthesis; CoA from (R)-pantothenate: step 4/5. Functionally, reversibly transfers an adenylyl group from ATP to 4'-phosphopantetheine, yielding dephospho-CoA (dPCoA) and pyrophosphate. In Streptococcus pneumoniae (strain Taiwan19F-14), this protein is Phosphopantetheine adenylyltransferase.